A 60-amino-acid polypeptide reads, in one-letter code: Mastoparan-B (60 aa).

An N-terminal signal peptide occupies residues Met1 to Ala27. AXPX repeat units follow at residues Ala27–Leu30, Ala31–Leu34, Ala35–Asn38, and Ala41–Glu44. Residues Asp28–Ala45 constitute a propeptide that is removed on maturation. Leu59 is modified (leucine amide).

The protein belongs to the MCD family. Mastoparan subfamily. In terms of tissue distribution, expressed by the venom gland.

It is found in the secreted. The protein localises to the target cell membrane. In terms of biological role, antimicrobial and mast cell degranulating peptide. Has broad spectrum antibacterial activity against both Gram-positive (S.aureus MIC=96-128 ug/ml, S.xylosus MIC=2 ug/ml, S.alactolyticus MIC=32 ug/ml, and S.choleraesuis MIC=32 ug/ml) and Gram-negative bacteria (C.koseri MIC=6 ug/ml, E.coli MIC=3-16 ug/ml, K.pneumoniae MIC=128 ug/ml, P.aerugiosa MIC=128 ug/ml, S.typhimurium MIC=64 ug/ml, V.parahamelytics MIC=32 ug/ml, and S.enterica), as well as on fungi (C.albicans, C.glabrata, and C.neoformans). Does not show antimicrobial activity against S.mutans. Affects membrane permeability of E.coli. Also acts as a mast cell degranulating peptide, that causes liberation of histamine from rat peritoneal mast cells. Its mast cell degranulation activity may be related to the activation of G-protein coupled receptors in mast cells as well as interaction with other proteins located in cell endosomal membranes in the mast cells. Whether this peptide shows hemolytic activities is controversial, as Lin et al., 2011 and Ho et al., 1991 found a hemolytic activity on sheep, chicken and human erythrocytes, whereas Kim et al., 2016 found no hemolytic activity on human erythrocytes. In vivo, induces edema in the rat paw. The protein is Mastoparan-B of Vespa basalis (Hornet).